The following is a 189-amino-acid chain: Peptidyl-tRNA hydrolase (189 aa).

Tyr14 contributes to the tRNA binding site. The active-site Proton acceptor is His19. 3 residues coordinate tRNA: Phe64, Asn66, and Asn112.

The protein belongs to the PTH family. As to quaternary structure, monomer.

The protein resides in the cytoplasm. It catalyses the reaction an N-acyl-L-alpha-aminoacyl-tRNA + H2O = an N-acyl-L-amino acid + a tRNA + H(+). Its function is as follows. Hydrolyzes ribosome-free peptidyl-tRNAs (with 1 or more amino acids incorporated), which drop off the ribosome during protein synthesis, or as a result of ribosome stalling. Functionally, catalyzes the release of premature peptidyl moieties from peptidyl-tRNA molecules trapped in stalled 50S ribosomal subunits, and thus maintains levels of free tRNAs and 50S ribosomes. This is Peptidyl-tRNA hydrolase from Rhizorhabdus wittichii (strain DSM 6014 / CCUG 31198 / JCM 15750 / NBRC 105917 / EY 4224 / RW1) (Sphingomonas wittichii).